Consider the following 234-residue polypeptide: CHD1 helical C-terminal domain containing protein 1 (234 aa).

Positions 1–38 (MEASDGQADEREEPLEQGTNARSLERRSSTTPAKDSLV) are disordered. The segment at 44 to 145 (LDRDTFKICK…NNQTTKFLMA (102 aa)) is CHD1 helical C-terminal domain (CHCT). The disordered stretch occupies residues 200–234 (LRARGPRRRGSKLPQEPKLKRRRIKEAPDTPETCL).

Its subcellular location is the cytoplasm. The protein localises to the nucleus. May play a role in regulation of apoptosis. The protein is CHD1 helical C-terminal domain containing protein 1 (CHCT1) of Bos taurus (Bovine).